A 260-amino-acid polypeptide reads, in one-letter code: Sulfoquinovose 1-dehydrogenase (260 aa).

The Proton acceptor role is filled by tyrosine 160.

Belongs to the short-chain dehydrogenases/reductases (SDR) family.

It catalyses the reaction 6-sulfo-D-quinovose + NAD(+) = 6-deoxy-6-sulfo-D-glucono-1,5-lactone + NADH + H(+). Its function is as follows. Catalyzes the oxidation of sulfoquinovose to 6-deoxy-6-sulfo-D-glucono-1,5-lactone, with a strong preference for NAD(+) as the electron acceptor. Is involved in a degradation pathway of sulfoquinovose (SQ) that allows P.putida SQ1 to use SQ as the sole carbon and energy source for growth. The polypeptide is Sulfoquinovose 1-dehydrogenase (Pseudomonas putida (Arthrobacter siderocapsulatus)).